A 363-amino-acid chain; its full sequence is UDP-N-acetylglucosamine--N-acetylmuramyl-(pentapeptide) pyrophosphoryl-undecaprenol N-acetylglucosamine transferase (363 aa).

Residues 14–16, Asn-122, Arg-163, Ser-190, and Gln-285 contribute to the UDP-N-acetyl-alpha-D-glucosamine site; that span reads TGG.

This sequence belongs to the glycosyltransferase 28 family. MurG subfamily.

It is found in the cell inner membrane. The catalysed reaction is di-trans,octa-cis-undecaprenyl diphospho-N-acetyl-alpha-D-muramoyl-L-alanyl-D-glutamyl-meso-2,6-diaminopimeloyl-D-alanyl-D-alanine + UDP-N-acetyl-alpha-D-glucosamine = di-trans,octa-cis-undecaprenyl diphospho-[N-acetyl-alpha-D-glucosaminyl-(1-&gt;4)]-N-acetyl-alpha-D-muramoyl-L-alanyl-D-glutamyl-meso-2,6-diaminopimeloyl-D-alanyl-D-alanine + UDP + H(+). The protein operates within cell wall biogenesis; peptidoglycan biosynthesis. Its function is as follows. Cell wall formation. Catalyzes the transfer of a GlcNAc subunit on undecaprenyl-pyrophosphoryl-MurNAc-pentapeptide (lipid intermediate I) to form undecaprenyl-pyrophosphoryl-MurNAc-(pentapeptide)GlcNAc (lipid intermediate II). This chain is UDP-N-acetylglucosamine--N-acetylmuramyl-(pentapeptide) pyrophosphoryl-undecaprenol N-acetylglucosamine transferase, found in Prochlorococcus marinus (strain MIT 9301).